The chain runs to 324 residues: MAKMEFQKGSSDQRTFISAILNMLSLGLSTASLLSSEWFVGTQKVPKPLCGQSLAAKCFDMPMSLDGGIANTSAQEVVQYTWETGDDRFSFLAFRSGMWLSCEETMEEPGEKCRRFIELTPPAQRWLSLGAQTAYIGLQLISFLLLLTDLLLTTNPGCGLKLSAFAAVSLVLSGLLGMVAHMLYSQVFQATANLGPEDWRPHSWNYGWAFYTAWVSFTCCMASAVTTFNMYTRMVLEFKCRHSKSFNTNPSCLAQHHRCFLPPPLTCTTHAGEPLSSCHQYPSHPIRSVSEAIDLYSALQDKEFQQGISQELKEVVEPSVEEQR.

4 helical membrane-spanning segments follow: residues 15 to 35 (TFIS…SLLS), 127 to 147 (LSLG…LLLL), 164 to 184 (AFAA…HMLY), and 208 to 228 (WAFY…VTTF).

Belongs to the GSG1 family. As to quaternary structure, interacts with PAPOLB. In terms of tissue distribution, expressed in spermatogenic cells (at protein level). Expressed in germ cells within the testis from day 21 onwards.

The protein resides in the endoplasmic reticulum membrane. In terms of biological role, may cause the redistribution of PAPOLB from the cytosol to the endoplasmic reticulum. This Mus musculus (Mouse) protein is Germ cell-specific gene 1 protein (Gsg1).